The following is an 823-amino-acid chain: Protein FAM193B (823 aa).

Disordered regions lie at residues 1 to 78 (MTRR…TSQS), 158 to 191 (SCKS…NSGD), 209 to 281 (SPHS…PTTP), and 381 to 409 (CEAD…HQRD). Residues 26–36 (PQAPEPPPPPS) are compositionally biased toward pro residues. The segment covering 52–64 (PYRDDPREEDEPK) has biased composition (basic and acidic residues). Composition is skewed to low complexity over residues 168–184 (SHSS…SSSS) and 263–281 (SHPG…PTTP). Residues 382–393 (EADEGLGEEEDS) are compositionally biased toward acidic residues. Residues 422 to 484 (GHNAEKEKAQ…RLQEIKNTVK (63 aa)) are a coiled coil. 2 disordered regions span residues 503 to 583 (FSKE…PENG) and 599 to 775 (WVKT…PKDM). Composition is skewed to polar residues over residues 516-526 (LAPSNPSGSSE) and 641-657 (QGNQ…SQSP). Phosphoserine is present on residues serine 694, serine 706, and serine 813.

This sequence belongs to the FAM193 family.

The protein resides in the cytoplasm. It localises to the nucleus. The sequence is that of Protein FAM193B (FAM193B) from Bos taurus (Bovine).